A 334-amino-acid chain; its full sequence is MNISVNGQSQVPPGFRFHPTEEELLKYYLRKKISNIKIDLDVIPDIDLNKLEPWDIQEMCKIGTTPQNDWYFYSHKDKKYPTGTRTNRATTVGFWKATGRDKTIYTNGDRIGMRKTLVFYKGRAPHGQKSDWIMHEYRLDESVLISSCGDHDVNVETCDVIGSDEGWVVCRVFKKNNLCKNMISSSPASSVKTPSFNEETIEQLLEVMGQSCKGEIVLDPFLKLPNLECHNNTTITSYQWLIDDQVNNCHVSKVMDPSFITSWAALDRLVASQLNGPNSYSIPAVNETSQSPYHGLNRSGCNTGLTPDYYIPEIDLWNEADFARTTCHLLNGSG.

The NAC domain occupies 11-175 (VPPGFRFHPT…GWVVCRVFKK (165 aa)). Residues 111–181 (IGMRKTLVFY…VFKKNNLCKN (71 aa)) mediate DNA binding.

In terms of tissue distribution, mostly expressed in anthers. Also present in pollen, base of siliques and inflorescence stems.

The protein resides in the nucleus. Transcription activator of genes involved in biosynthesis of secondary walls. Together with NST1, required for the secondary cell wall thickening of the anther endocethium, which is necessary for anther dehiscence. May also regulate the secondary cell wall lignification of other tissues such as tracheary elements. This Arabidopsis thaliana (Mouse-ear cress) protein is NAC domain-containing protein 66 (NAC066).